The sequence spans 103 residues: Large ribosomal subunit protein bL21 (103 aa).

This sequence belongs to the bacterial ribosomal protein bL21 family. In terms of assembly, part of the 50S ribosomal subunit. Contacts protein L20.

Its function is as follows. This protein binds to 23S rRNA in the presence of protein L20. The chain is Large ribosomal subunit protein bL21 from Mycobacterium tuberculosis (strain ATCC 25618 / H37Rv).